A 168-amino-acid polypeptide reads, in one-letter code: MPRSRINGNFIDKTFSIVANILLRIIPTTSGEKEAFTYYRDGMSAQSEGNYAEALQNYYEATRLEIDPYDRSYILYNIGLIHTSNGEHTKALEYYFRALERNPFLPQAFNNMAVICHYRGEQAIQQGDSEIAESWFDQAAEYWKQAIALTPGNYIEAHNWLKITRRFE.

TPR repeat units follow at residues 35–68 (AFTYYRDGMSAQSEGNYAEALQNYYEATRLEIDP), 72–105 (SYILYNIGLIHTSNGEHTKALEYYFRALERNPFL), and 120–153 (GEQAIQQGDSEIAESWFDQAAEYWKQAIALTPGN).

The protein belongs to the Ycf3 family.

It localises to the plastid. It is found in the chloroplast thylakoid membrane. Essential for the assembly of the photosystem I (PSI) complex. May act as a chaperone-like factor to guide the assembly of the PSI subunits. This chain is Photosystem I assembly protein Ycf3, found in Nandina domestica (Heavenly bamboo).